Here is a 425-residue protein sequence, read N- to C-terminus: Aspyridones cluster regulator (425 aa).

The segment at residues C100 to C127 is a DNA-binding region (zn(2)-C6 fungal-type). Residues L132–S159 are disordered. The span at R133 to Q157 shows a compositional bias: polar residues.

The protein resides in the nucleus. Its function is as follows. Transcription factor involved in regulation of gene cluster that mediates the biosynthesis of aphidicolin. The protein is Aspyridones cluster regulator (TF) of Neocamarosporium betae (Beet black rot fungus).